A 332-amino-acid polypeptide reads, in one-letter code: MALPEFSMRQLLEAGVHFGHQSHRWNPKMADYIFGARNNIHIIDLAQTVPLLHRALQAVSDTVAKGGRILFVGTKRQAQDGVADAAKRSAQYFVNSRWLGGTLTNWKTISGSIKRLRHLDEVLSSGDANAYTKKERLTLQRERDKLDRSLGGIKDMGGLPDLIFVIDTNKEDIAIQEAQRLNIPVAAIVDTNCDPKGITYLVPGNDDAGRAISLYCDLIARAAIDGISRAQGDSGIDIGASVQPVQEELPAAAQPAGFQGLAGPRGVADDLKKLTGVSGEIEKKFNDLGIFHYWQLAEFDHETAHKIGEEVGLPSRADGWVAQAKALTAEAE.

Belongs to the universal ribosomal protein uS2 family.

The protein is Small ribosomal subunit protein uS2 of Nitrobacter hamburgensis (strain DSM 10229 / NCIMB 13809 / X14).